The chain runs to 146 residues: Ribonuclease H (146 aa).

One can recognise an RNase H type-1 domain in the interval 1 to 143; that stretch reads MQKKVTIYTD…CDYLATQAIK (143 aa). Mg(2+) contacts are provided by aspartate 10, glutamate 48, aspartate 70, and aspartate 135.

The protein belongs to the RNase H family. In terms of assembly, monomer. Requires Mg(2+) as cofactor.

The protein resides in the cytoplasm. It catalyses the reaction Endonucleolytic cleavage to 5'-phosphomonoester.. In terms of biological role, endonuclease that specifically degrades the RNA of RNA-DNA hybrids. In Chlorobium phaeobacteroides (strain BS1), this protein is Ribonuclease H.